A 158-amino-acid polypeptide reads, in one-letter code: Transcription factor bHLH146 (158 aa).

A compositionally biased stretch (low complexity) spans 77–90; sequence SSSSNPTTTTSSSS. Residues 77–110 are disordered; sequence SSSSNPTTTTSSSSDGIRILERPDKEGGNEEGGI. A compositionally biased stretch (basic and acidic residues) spans 94–110; that stretch reads RILERPDKEGGNEEGGI. Residues 94 to 143 enclose the bHLH; atypical domain; the sequence is RILERPDKEGGNEEGGIEERLRELKKLLPGGEEMNVEEMLSEIGNYIKCL.

This sequence belongs to the bHLH protein family.

It is found in the nucleus. The chain is Transcription factor bHLH146 (BHLH146) from Arabidopsis thaliana (Mouse-ear cress).